Consider the following 398-residue polypeptide: Phytoene synthase, chloroplastic (398 aa).

It belongs to the phytoene/squalene synthase family. Monomer.

It localises to the plastid. The protein localises to the chloroplast. It catalyses the reaction 2 (2E,6E,10E)-geranylgeranyl diphosphate = 15-cis-phytoene + 2 diphosphate. Its pathway is carotenoid biosynthesis; phytoene biosynthesis; all-trans-phytoene from geranylgeranyl diphosphate: step 1/1. Its function is as follows. Catalyzes the reaction from prephytoene diphosphate to phytoene. The polypeptide is Phytoene synthase, chloroplastic (PSY) (Daucus carota (Wild carrot)).